Consider the following 325-residue polypeptide: MGKKVIVLGEIRDGELRNVTFEAIAAGRTISGDGEVIGVLIGENVQSIAQELIHYGADKVLTAEDPKLKTYTADGYSQVMRGVIEQENPDSVIFGHTAMGKDLSPKLAARLQTGLISDAIDVSVTGGNVVFTRPIYSGKAFERVISTDPMIFATIRPNNIQASEKDTSRSGSIESIDVSLTDLRTVIQEVVKKTADGVDLSEAKIIVAGGRGVKSKEGFQPLQELAEVLGAAVGASRGACDADYCDYALQIGQTGKVVTPDLYIACGISGAIQHLAGMSNSKVIVAINKDPEADIFKIADYGIVGDLFEVVPLLTEEFKQLNIHS.

An FAD-binding site is contributed by 262 to 290; it reads LYIACGISGAIQHLAGMSNSKVIVAINKD.

The protein belongs to the ETF alpha-subunit/FixB family. In terms of assembly, heterodimer of an alpha and a beta subunit. The cofactor is FAD.

The electron transfer flavoprotein serves as a specific electron acceptor for other dehydrogenases. It transfers the electrons to the main respiratory chain via ETF-ubiquinone oxidoreductase (ETF dehydrogenase). The sequence is that of Electron transfer flavoprotein subunit alpha (etfA) from Bacillus subtilis (strain 168).